A 401-amino-acid polypeptide reads, in one-letter code: E3 ubiquitin-protein ligase NHLRC1 (401 aa).

An RING-type zinc finger spans residues 28 to 74 (CKVCFERFGHWQQRRPRNLPCGHVVCLACVAALAHPRTLGLECPFCR). NHL repeat units lie at residues 115-159 (TLTC…FDSG), 163-206 (AHQF…FDFF), 207-247 (GQIK…LEAD), 250-303 (EGVL…FNST), 304-352 (MQLI…LGKP), and 353-396 (EEFP…FKVM).

As to quaternary structure, interacts with AGL. Interacts (via the NHL repeats) with EPM2A/laforin. Forms a complex with EPM2A/laforin and HSP70. Interacts with PRDM8.

Its subcellular location is the endoplasmic reticulum. It localises to the nucleus. It catalyses the reaction S-ubiquitinyl-[E2 ubiquitin-conjugating enzyme]-L-cysteine + [acceptor protein]-L-lysine = [E2 ubiquitin-conjugating enzyme]-L-cysteine + N(6)-ubiquitinyl-[acceptor protein]-L-lysine.. The protein operates within protein modification; protein ubiquitination. Functionally, E3 ubiquitin-protein ligase. Together with the phosphatase EPM2A/laforin, appears to be involved in the clearance of toxic polyglucosan and protein aggregates via multiple pathways. In complex with EPM2A/laforin and HSP70, suppresses the cellular toxicity of misfolded proteins by promoting their degradation through the ubiquitin-proteasome system (UPS). Ubiquitinates the glycogen-targeting protein phosphatase subunits PPP1R3C/PTG and PPP1R3D in a laforin-dependent manner and targets them for proteasome-dependent degradation, thus decreasing glycogen accumulation. Polyubiquitinates EPM2A/laforin and ubiquitinates AGL and targets them for proteasome-dependent degradation. Also promotes proteasome-independent protein degradation through the macroautophagy pathway. The sequence is that of E3 ubiquitin-protein ligase NHLRC1 (Nhlrc1) from Mus musculus (Mouse).